The primary structure comprises 772 residues: Protein U58 (772 aa).

Belongs to the herpesviridae UL87 family.

The sequence is that of Protein U58 (U58) from Human herpesvirus 6B (strain Z29) (HHV-6 variant B).